The chain runs to 100 residues: Small ribosomal subunit protein uS14c (100 aa).

This sequence belongs to the universal ribosomal protein uS14 family. As to quaternary structure, part of the 30S ribosomal subunit.

The protein resides in the plastid. It localises to the chloroplast. Functionally, binds 16S rRNA, required for the assembly of 30S particles. This chain is Small ribosomal subunit protein uS14c, found in Rhodomonas salina (Cryptomonas salina).